The chain runs to 339 residues: Glucokinase (339 aa).

16–21 is an ATP binding site; that stretch reads GDIGGT.

Belongs to the bacterial glucokinase family.

It localises to the cytoplasm. The enzyme catalyses D-glucose + ATP = D-glucose 6-phosphate + ADP + H(+). This is Glucokinase from Sinorhizobium medicae (strain WSM419) (Ensifer medicae).